Here is a 353-residue protein sequence, read N- to C-terminus: Photosystem II protein D1 (353 aa).

The residue at position 2 (T2) is an N-acetylthreonine. T2 bears the Phosphothreonine mark. Helical transmembrane passes span 29–46 (YIGWFGVLMIPTLLTATS), 118–133 (HFLLGVACYMGREWEL), and 142–156 (WIAVAYSAPVAAATA). Chlorophyll a is bound at residue H118. Y126 serves as a coordination point for pheophytin a. Residues D170 and E189 each coordinate [CaMn4O5] cluster. The chain crosses the membrane as a helical span at residues 197-218 (FHMLGVAGVFGGSLFSAMHGSL). Chlorophyll a is bound at residue H198. A quinone is bound by residues H215 and 264 to 265 (SF). Fe cation is bound at residue H215. Residue H272 participates in Fe cation binding. The chain crosses the membrane as a helical span at residues 274–288 (FLAAWPVVGIWFTAL). Positions 332, 333, 342, and 344 each coordinate [CaMn4O5] cluster. The propeptide occupies 345–353 (AVEAPSING).

It belongs to the reaction center PufL/M/PsbA/D family. As to quaternary structure, PSII is composed of 1 copy each of membrane proteins PsbA, PsbB, PsbC, PsbD, PsbE, PsbF, PsbH, PsbI, PsbJ, PsbK, PsbL, PsbM, PsbT, PsbX, PsbY, PsbZ, Psb30/Ycf12, at least 3 peripheral proteins of the oxygen-evolving complex and a large number of cofactors. It forms dimeric complexes. Requires The D1/D2 heterodimer binds P680, chlorophylls that are the primary electron donor of PSII, and subsequent electron acceptors. It shares a non-heme iron and each subunit binds pheophytin, quinone, additional chlorophylls, carotenoids and lipids. D1 provides most of the ligands for the Mn4-Ca-O5 cluster of the oxygen-evolving complex (OEC). There is also a Cl(-1) ion associated with D1 and D2, which is required for oxygen evolution. The PSII complex binds additional chlorophylls, carotenoids and specific lipids. as cofactor. Tyr-161 forms a radical intermediate that is referred to as redox-active TyrZ, YZ or Y-Z. Post-translationally, C-terminally processed by CTPA; processing is essential to allow assembly of the oxygen-evolving complex and thus photosynthetic growth.

It is found in the plastid. The protein localises to the chloroplast thylakoid membrane. The catalysed reaction is 2 a plastoquinone + 4 hnu + 2 H2O = 2 a plastoquinol + O2. Photosystem II (PSII) is a light-driven water:plastoquinone oxidoreductase that uses light energy to abstract electrons from H(2)O, generating O(2) and a proton gradient subsequently used for ATP formation. It consists of a core antenna complex that captures photons, and an electron transfer chain that converts photonic excitation into a charge separation. The D1/D2 (PsbA/PsbD) reaction center heterodimer binds P680, the primary electron donor of PSII as well as several subsequent electron acceptors. In Lotus japonicus (Lotus corniculatus var. japonicus), this protein is Photosystem II protein D1.